Consider the following 163-residue polypeptide: Transcriptional repressor NrdR (163 aa).

Residues 3–34 (CVQCGHLEDKVIDSRMSKDGTTIRRRRVCLRC) fold into a zinc finger. The 91-residue stretch at 49–139 (LRVVKRDNLR…VYRQFSNVEE (91 aa)) folds into the ATP-cone domain.

Belongs to the NrdR family. It depends on Zn(2+) as a cofactor.

Its function is as follows. Negatively regulates transcription of bacterial ribonucleotide reductase nrd genes and operons by binding to NrdR-boxes. The sequence is that of Transcriptional repressor NrdR from Akkermansia muciniphila (strain ATCC BAA-835 / DSM 22959 / JCM 33894 / BCRC 81048 / CCUG 64013 / CIP 107961 / Muc).